We begin with the raw amino-acid sequence, 453 residues long: Kynurenine 3-monooxygenase (453 aa).

The protein belongs to the aromatic-ring hydroxylase family. KMO subfamily. Requires FAD as cofactor.

It carries out the reaction L-kynurenine + NADPH + O2 + H(+) = 3-hydroxy-L-kynurenine + NADP(+) + H2O. It participates in cofactor biosynthesis; NAD(+) biosynthesis; quinolinate from L-kynurenine: step 1/3. Functionally, catalyzes the hydroxylation of L-kynurenine (L-Kyn) to form 3-hydroxy-L-kynurenine (L-3OHKyn). Required for synthesis of quinolinic acid. The polypeptide is Kynurenine 3-monooxygenase (Salinispora tropica (strain ATCC BAA-916 / DSM 44818 / JCM 13857 / NBRC 105044 / CNB-440)).